A 377-amino-acid chain; its full sequence is Succinyl-diaminopimelate desuccinylase (377 aa).

His-68 provides a ligand contact to Zn(2+). Asp-70 is a catalytic residue. Position 101 (Asp-101) interacts with Zn(2+). Residue Glu-135 is the Proton acceptor of the active site. Residues Glu-136, Glu-164, and His-350 each coordinate Zn(2+).

Belongs to the peptidase M20A family. DapE subfamily. As to quaternary structure, homodimer. It depends on Zn(2+) as a cofactor. Requires Co(2+) as cofactor.

The enzyme catalyses N-succinyl-(2S,6S)-2,6-diaminopimelate + H2O = (2S,6S)-2,6-diaminopimelate + succinate. Its pathway is amino-acid biosynthesis; L-lysine biosynthesis via DAP pathway; LL-2,6-diaminopimelate from (S)-tetrahydrodipicolinate (succinylase route): step 3/3. Its function is as follows. Catalyzes the hydrolysis of N-succinyl-L,L-diaminopimelic acid (SDAP), forming succinate and LL-2,6-diaminopimelate (DAP), an intermediate involved in the bacterial biosynthesis of lysine and meso-diaminopimelic acid, an essential component of bacterial cell walls. The polypeptide is Succinyl-diaminopimelate desuccinylase (Psychromonas ingrahamii (strain DSM 17664 / CCUG 51855 / 37)).